Here is a 316-residue protein sequence, read N- to C-terminus: Acetyl-coenzyme A carboxylase carboxyl transferase subunit alpha (316 aa).

The 251-residue stretch at 40-290 folds into the CoA carboxyltransferase C-terminal domain; it reads KARKELQRIY…RERFAHHLQE (251 aa).

The protein belongs to the AccA family. Acetyl-CoA carboxylase is a heterohexamer composed of biotin carboxyl carrier protein (AccB), biotin carboxylase (AccC) and two subunits each of ACCase subunit alpha (AccA) and ACCase subunit beta (AccD).

It is found in the cytoplasm. It carries out the reaction N(6)-carboxybiotinyl-L-lysyl-[protein] + acetyl-CoA = N(6)-biotinyl-L-lysyl-[protein] + malonyl-CoA. Its pathway is lipid metabolism; malonyl-CoA biosynthesis; malonyl-CoA from acetyl-CoA: step 1/1. In terms of biological role, component of the acetyl coenzyme A carboxylase (ACC) complex. First, biotin carboxylase catalyzes the carboxylation of biotin on its carrier protein (BCCP) and then the CO(2) group is transferred by the carboxyltransferase to acetyl-CoA to form malonyl-CoA. This is Acetyl-coenzyme A carboxylase carboxyl transferase subunit alpha from Acidithiobacillus ferrooxidans (strain ATCC 23270 / DSM 14882 / CIP 104768 / NCIMB 8455) (Ferrobacillus ferrooxidans (strain ATCC 23270)).